Here is a 136-residue protein sequence, read N- to C-terminus: Large ribosomal subunit protein uL16 (136 aa).

The protein belongs to the universal ribosomal protein uL16 family. As to quaternary structure, part of the 50S ribosomal subunit.

Its function is as follows. Binds 23S rRNA and is also seen to make contacts with the A and possibly P site tRNAs. The sequence is that of Large ribosomal subunit protein uL16 from Rickettsia akari (strain Hartford).